We begin with the raw amino-acid sequence, 546 residues long: Sulfite oxidase, mitochondrial (546 aa).

The N-terminal 80 residues, Met-1–Gln-80, are a transit peptide targeting the mitochondrion. Residues Pro-83 to Asn-162 enclose the Cytochrome b5 heme-binding domain. His-119 is a heme b binding site. Ser-124 is modified (phosphoserine). Positions 144, 146, and 148 each coordinate heme b. Residues Ser-166–Asp-175 are hinge. The interval Pro-176–Lys-402 is moco domain. Mo-molybdopterin is bound by residues Phe-216–His-220, Cys-265, Asp-323, His-362, Arg-367, and His-378–Lys-380. The segment at Gly-403–Arg-539 is homodimerization.

As to quaternary structure, homodimer. Heme b serves as cofactor. Mo-molybdopterin is required as a cofactor.

Its subcellular location is the mitochondrion intermembrane space. It catalyses the reaction sulfite + O2 + H2O = sulfate + H2O2. It functions in the pathway energy metabolism; sulfur metabolism. Functionally, catalyzes the oxidation of sulfite to sulfate, the terminal reaction in the oxidative degradation of sulfur-containing amino acids. This Mus musculus (Mouse) protein is Sulfite oxidase, mitochondrial (Suox).